The chain runs to 348 residues: Serine/threonine-protein kinase SBK2 (348 aa).

The disordered stretch occupies residues M1–G25. The Protein kinase domain maps to Y62–R330. ATP-binding positions include L68–V76 and K91. D183 acts as the Proton acceptor in catalysis.

The protein belongs to the protein kinase superfamily. Ser/Thr protein kinase family. STKL subfamily.

It carries out the reaction L-seryl-[protein] + ATP = O-phospho-L-seryl-[protein] + ADP + H(+). It catalyses the reaction L-threonyl-[protein] + ATP = O-phospho-L-threonyl-[protein] + ADP + H(+). This chain is Serine/threonine-protein kinase SBK2 (SBK2), found in Homo sapiens (Human).